Consider the following 617-residue polypeptide: tRNA uridine 5-carboxymethylaminomethyl modification enzyme MnmG (617 aa).

Residues 9 to 14, valine 121, and threonine 176 contribute to the FAD site; that span reads GAGHAG. Residue 269–283 participates in NAD(+) binding; that stretch reads GPRYCPSIEDKFVRF. Position 366 (glutamine 366) interacts with FAD.

Belongs to the MnmG family. Homodimer. Heterotetramer of two MnmE and two MnmG subunits. FAD serves as cofactor.

It localises to the cytoplasm. In terms of biological role, NAD-binding protein involved in the addition of a carboxymethylaminomethyl (cmnm) group at the wobble position (U34) of certain tRNAs, forming tRNA-cmnm(5)s(2)U34. The protein is tRNA uridine 5-carboxymethylaminomethyl modification enzyme MnmG of Acholeplasma laidlawii (strain PG-8A).